The primary structure comprises 505 residues: Lysine--tRNA ligase (505 aa).

2 residues coordinate Mg(2+): Glu-415 and Glu-422.

Belongs to the class-II aminoacyl-tRNA synthetase family. As to quaternary structure, homodimer. Requires Mg(2+) as cofactor.

It is found in the cytoplasm. The enzyme catalyses tRNA(Lys) + L-lysine + ATP = L-lysyl-tRNA(Lys) + AMP + diphosphate. This is Lysine--tRNA ligase from Salmonella arizonae (strain ATCC BAA-731 / CDC346-86 / RSK2980).